A 113-amino-acid polypeptide reads, in one-letter code: Large ribosomal subunit protein eL31 (113 aa).

It belongs to the eukaryotic ribosomal protein eL31 family. As to quaternary structure, component of the large ribosomal subunit (LSU). Mature yeast ribosomes consist of a small (40S) and a large (60S) subunit. The 40S small subunit contains 1 molecule of ribosomal RNA (18S rRNA) and at least 33 different proteins. The large 60S subunit contains 3 rRNA molecules (25S, 5.8S and 5S rRNA) and at least 46 different proteins.

Its subcellular location is the cytoplasm. In terms of biological role, component of the ribosome, a large ribonucleoprotein complex responsible for the synthesis of proteins in the cell. The small ribosomal subunit (SSU) binds messenger RNAs (mRNAs) and translates the encoded message by selecting cognate aminoacyl-transfer RNA (tRNA) molecules. The large subunit (LSU) contains the ribosomal catalytic site termed the peptidyl transferase center (PTC), which catalyzes the formation of peptide bonds, thereby polymerizing the amino acids delivered by tRNAs into a polypeptide chain. The nascent polypeptides leave the ribosome through a tunnel in the LSU and interact with protein factors that function in enzymatic processing, targeting, and the membrane insertion of nascent chains at the exit of the ribosomal tunnel. In Schizosaccharomyces pombe (strain 972 / ATCC 24843) (Fission yeast), this protein is Large ribosomal subunit protein eL31 (rpl31).